The following is a 194-amino-acid chain: uncharacterized protein (194 aa).

An N-terminal signal peptide occupies residues M1–A20. Residues N31, N72, N133, and N157 are each glycosylated (N-linked (GlcNAc...) asparagine; by host).

This is an uncharacterized protein from Ostreid herpesvirus 1 (isolate France) (OsHV-1).